Consider the following 604-residue polypeptide: Baculoviral IAP repeat-containing protein 3 (604 aa).

3 BIR repeats span residues 29-96 (ELYR…CRFV), 169-235 (ENAR…CPFI), and 255-322 (HAAR…CEYL). Residues Cys292, Cys295, His312, and Cys319 each coordinate Zn(2+). The CARD domain maps to 439-529 (KESNDLLLIR…VLYEHLFVQQ (91 aa)). The segment at 557 to 592 (CKVCMDKEVSIVFIPCGHLVVCKDCAPSLRKCPICR) adopts an RING-type zinc-finger fold.

This sequence belongs to the IAP family. Interacts with PRSS25; interaction inhibits apoptotic suppressor activity. The BIR motifs region interacts with TNF receptor associated factors 1 and 2 (TRAF1 and TRAF2) to form a heteromeric complex, which is then recruited to the tumor necrosis factor receptor 2 (TNFR2). Interaction with TRAF2 is required for ubiquitination of IKBKE, degradation of NFKBIA and activation of NF-kappa-B. Interacts with RIP1, RIP2, RIP3, RIP4 and USP19. Auto-ubiquitinated and degraded by the proteasome in apoptotic cells. In terms of tissue distribution, highly expressed in fetal lung, and kidney. In the adult, expression is mainly seen in lymphoid tissues, including spleen, thymus and peripheral blood lymphocytes.

It localises to the cytoplasm. The protein localises to the nucleus. The enzyme catalyses S-ubiquitinyl-[E2 ubiquitin-conjugating enzyme]-L-cysteine + [acceptor protein]-L-lysine = [E2 ubiquitin-conjugating enzyme]-L-cysteine + N(6)-ubiquitinyl-[acceptor protein]-L-lysine.. USP19 regulates the stability of BIRC3/c-IAP2 by preventing its ubiquitination. Functionally, multi-functional protein which regulates not only caspases and apoptosis, but also modulates inflammatory signaling and immunity, mitogenic kinase signaling and cell proliferation, as well as cell invasion and metastasis. Acts as an E3 ubiquitin-protein ligase regulating NF-kappa-B signaling and regulates both canonical and non-canonical NF-kappa-B signaling by acting in opposite directions: acts as a positive regulator of the canonical pathway and suppresses constitutive activation of non-canonical NF-kappa-B signaling. The target proteins for its E3 ubiquitin-protein ligase activity include: RIPK1, RIPK2, RIPK3, RIPK4, CASP3, CASP7, CASP8, IKBKE, TRAF1, and BCL10. Acts as an important regulator of innate immune signaling via regulation of Toll-like receptors (TLRs), Nodlike receptors (NLRs) and RIG-I like receptors (RLRs), collectively referred to as pattern recognition receptors (PRRs). Protects cells from spontaneous formation of the ripoptosome, a large multi-protein complex that has the capability to kill cancer cells in a caspase-dependent and caspase-independent manner. Suppresses ripoptosome formation by ubiquitinating RIPK1 and CASP8. The protein is Baculoviral IAP repeat-containing protein 3 (BIRC3) of Homo sapiens (Human).